Consider the following 275-residue polypeptide: MSVKAYLELIRVHNVVGSAVSAFMGYVIATTWKFTPLFFLPLLVVSLIAAGGYVINDVYDIEVDKINKPERPLPSGRIAVNIARRFSIVLFAVGLIISIPLGLIPFGFALITIVLLYEYARSLKKLGLVGNFIVALTSALSAYYGGLASGSLLGNFIIPTIYIFFFTLSREFVKGIEDIEGDKRNGVNTLAVKLGEKSTWIIAKIILGILIFTSPLPYFLGFNVIYLIGILALDVLLVYILILHNTIESATKARSLMKIYAIGTLIVFTLGSLRI.

8 helical membrane-spanning segments follow: residues valine 12 to tryptophan 32, threonine 35 to isoleucine 55, isoleucine 88 to phenylalanine 108, lysine 125 to glycine 145, glycine 146 to phenylalanine 166, tryptophan 200 to leucine 220, valine 224 to histidine 244, and serine 255 to isoleucine 275.

Belongs to the UbiA prenyltransferase family. DGGGP synthase subfamily. Requires Mg(2+) as cofactor.

It localises to the cell membrane. The enzyme catalyses sn-3-O-(geranylgeranyl)glycerol 1-phosphate + (2E,6E,10E)-geranylgeranyl diphosphate = 2,3-bis-O-(geranylgeranyl)-sn-glycerol 1-phosphate + diphosphate. Its pathway is membrane lipid metabolism; glycerophospholipid metabolism. Functionally, prenyltransferase that catalyzes the transfer of the geranylgeranyl moiety of geranylgeranyl diphosphate (GGPP) to the C2 hydroxyl of (S)-3-O-geranylgeranylglyceryl phosphate (GGGP). This reaction is the second ether-bond-formation step in the biosynthesis of archaeal membrane lipids. In Sulfolobus acidocaldarius (strain ATCC 33909 / DSM 639 / JCM 8929 / NBRC 15157 / NCIMB 11770), this protein is Digeranylgeranylglyceryl phosphate synthase.